Consider the following 273-residue polypeptide: Urease accessory protein UreD (273 aa).

Belongs to the UreD family. In terms of assembly, ureD, UreF and UreG form a complex that acts as a GTP-hydrolysis-dependent molecular chaperone, activating the urease apoprotein by helping to assemble the nickel containing metallocenter of UreC. The UreE protein probably delivers the nickel.

The protein localises to the cytoplasm. In terms of biological role, required for maturation of urease via the functional incorporation of the urease nickel metallocenter. The chain is Urease accessory protein UreD from Rhizobium rhizogenes (strain K84 / ATCC BAA-868) (Agrobacterium radiobacter).